The chain runs to 459 residues: Transcriptional coactivator YAP1 (459 aa).

Phosphoserine; by LATS1 and LATS2 is present on residues Ser-21, Ser-69, Ser-87, and Ser-119. Disordered stretches follow at residues Leu-51–Ser-88 and Ser-103–Pro-129. WW domains are found at residues Val-126–Lys-159 and Gly-186–Leu-219. 2 disordered regions span residues Thr-231–Asn-254 and Pro-307–Ser-364. The transactivation domain stretch occupies residues His-247–Leu-459. Composition is skewed to polar residues over residues Pro-307–Tyr-347 and Asp-355–Ser-364.

This sequence belongs to the YAP1 family. Post-translationally, phosphorylated by lats1 and lats2; leading to cytoplasmic translocation and inactivation. In terms of tissue distribution, ubiquitously expressed throughout development.

It localises to the cytoplasm. The protein resides in the nucleus. Its subcellular location is the cell junction. The protein localises to the tight junction. It is found in the cell membrane. In terms of biological role, transcriptional regulator which can act both as a coactivator and a corepressor and is the critical downstream regulatory target in the Hippo signaling pathway that plays a pivotal role in organ size control and tumor suppression by restricting proliferation and promoting apoptosis. Plays a key role in tissue tension and 3D tissue shape by regulating cortical actomyosin network formation. This is Transcriptional coactivator YAP1 from Oryzias latipes (Japanese rice fish).